The sequence spans 645 residues: Putative galactocerebrosidase (645 aa).

Positions M1–A16 are cleaved as a signal peptide. Substrate is bound by residues T87 and W128. N141 is a glycosylation site (N-linked (GlcNAc...) asparagine). Position 171 (N171) interacts with substrate. The Proton donor/acceptor role is filled by E172. N-linked (GlcNAc...) asparagine glycans are attached at residues N174 and N193. The Nucleophile role is filled by E248. A disulfide bridge connects residues C261 and C365. N-linked (GlcNAc...) asparagine glycans are attached at residues N274, N395, N411, N532, N616, N620, and N638.

The protein belongs to the glycosyl hydrolase 59 family.

It carries out the reaction a beta-D-Gal-(1&lt;-&gt;1')-ceramide + H2O = an N-acyl-sphingoid base + D-galactose. The catalysed reaction is a beta-D-galactosyl-(1&lt;-&gt;1')-N-acylsphing-4-enine + H2O = an N-acylsphing-4-enine + D-galactose. Its function is as follows. Hydrolyzes the galactose ester bonds of galactosylceramide, galactosylsphingoid base, lactosylceramide, and monogalactosyldiglyceride. C.elegans contain specific sphingoid bases, which are unique or different in structure compared to the sphingoid bases found in other animals. Two examples of these distinctive compounds are: 15-methylhexadecasphinganine and 15-methylhexadecasphing-4-enine. This chain is Putative galactocerebrosidase, found in Caenorhabditis elegans.